Consider the following 811-residue polypeptide: N-terminal acetyltransferase B complex subunit arm1 (811 aa).

It belongs to the MDM20/NAA25 family. As to quaternary structure, component of the N-terminal acetyltransferase B (NatB) complex.

The protein resides in the cytoplasm. Functionally, non-catalytic subunit of the NatB N-terminal acetyltransferase, which catalyzes acetylation of the amino-terminal methionine residues of all proteins beginning with Met-Asp or Met-Glu and of some proteins beginning with Met-Asn or Met-Met. The chain is N-terminal acetyltransferase B complex subunit arm1 (arm1) from Schizosaccharomyces pombe (strain 972 / ATCC 24843) (Fission yeast).